The chain runs to 465 residues: Alpha-2A adrenergic receptor (465 aa).

At 1-48 (MFRQEQPLAEGSFAPMGSLQPEAGNASWNGTEAPGGGARATPYSLQVT) the chain is on the extracellular side. N-linked (GlcNAc...) asparagine glycosylation is found at Asn25 and Asn29. The chain crosses the membrane as a helical span at residues 49-74 (LTLVCLAGLLMLFTVFGNVLVIIAVF). Residues 75-85 (TSRALKAPQNL) lie on the Cytoplasmic side of the membrane. The chain crosses the membrane as a helical span at residues 86–111 (FLVSLASADILVATLVIPFSLANEVM). Topologically, residues 112-121 (GYWYFGKAWC) are extracellular. Cys121 and Cys203 form a disulfide bridge. Residues 122–144 (EIYLALDVLFCTSSIVHLCAISL) form a helical membrane-spanning segment. Residues 145–164 (DRYWSITQAIEYNLKRTPRR) are Cytoplasmic-facing. The chain crosses the membrane as a helical span at residues 165–188 (IKAIIVTVWVISAVISFPPLISIE). At 189 to 207 (KKAGGGGQQPAEPRCEIND) the chain is on the extracellular side. A helical membrane pass occupies residues 208–232 (QKWYVISSCIGSFFAPCLIMILVYV). At 233-389 (RIYQIAKRRT…RQNREKRFTF (157 aa)) the chain is on the cytoplasmic side. Positions 242-377 (TRVPPSRRGP…RGGVAKASRW (136 aa)) are disordered. Basic and acidic residues predominate over residues 313 to 330 (SSEHAERPPGPRRSERGP). Ser346 carries the phosphoserine modification. At Arg368 the chain carries Omega-N-methylarginine. The chain crosses the membrane as a helical span at residues 390–414 (VLAVVIGVFVVCWFPFFFTYTLTAV). At 415 to 424 (GCSVPPTLFK) the chain is on the extracellular side. A helical membrane pass occupies residues 425 to 445 (FFFWFGYCNSSLNPVIYTIFN). The Cytoplasmic segment spans residues 446-465 (HDFRRAFKKILCRGDRKRIV). Cys457 carries S-palmitoyl cysteine lipidation.

This sequence belongs to the G-protein coupled receptor 1 family. Adrenergic receptor subfamily. ADRA2A sub-subfamily.

The protein resides in the cell membrane. Its function is as follows. Alpha-2 adrenergic receptors mediate the catecholamine-induced inhibition of adenylate cyclase through the action of G proteins. The sequence is that of Alpha-2A adrenergic receptor from Sus scrofa (Pig).